The primary structure comprises 236 residues: Phosphoribosylaminoimidazole-succinocarboxamide synthase (236 aa).

The protein belongs to the SAICAR synthetase family.

It carries out the reaction 5-amino-1-(5-phospho-D-ribosyl)imidazole-4-carboxylate + L-aspartate + ATP = (2S)-2-[5-amino-1-(5-phospho-beta-D-ribosyl)imidazole-4-carboxamido]succinate + ADP + phosphate + 2 H(+). The protein operates within purine metabolism; IMP biosynthesis via de novo pathway; 5-amino-1-(5-phospho-D-ribosyl)imidazole-4-carboxamide from 5-amino-1-(5-phospho-D-ribosyl)imidazole-4-carboxylate: step 1/2. This chain is Phosphoribosylaminoimidazole-succinocarboxamide synthase (purC), found in Lactococcus lactis subsp. cremoris (Streptococcus cremoris).